The primary structure comprises 311 residues: Porphobilinogen deaminase (311 aa).

An S-(dipyrrolylmethanemethyl)cysteine modification is found at Cys243.

This sequence belongs to the HMBS family. In terms of assembly, monomer. It depends on dipyrromethane as a cofactor.

The enzyme catalyses 4 porphobilinogen + H2O = hydroxymethylbilane + 4 NH4(+). The protein operates within porphyrin-containing compound metabolism; protoporphyrin-IX biosynthesis; coproporphyrinogen-III from 5-aminolevulinate: step 2/4. In terms of biological role, tetrapolymerization of the monopyrrole PBG into the hydroxymethylbilane pre-uroporphyrinogen in several discrete steps. This Blochmanniella floridana protein is Porphobilinogen deaminase.